A 236-amino-acid polypeptide reads, in one-letter code: MSRLLPLLRSRTARSLRPGPAAAAAPRPPSWCCCGRGLLALAAPGGPRALGTHPKKEPIEALNTAQGARDFIYSLHSSERSCLLKELHRFESIAIAQEKLEAQPPTPGQLRYVFIHNAIPFIGFGFLDNAIMIVAGTHIELSIGIILGISTMAAAALGNLVSDLAGLGLAGYVEALASRLGLSIPDLSPKQVDMWQTRVSSHLGKAVGVTIGCILGMFPLIFFGGGEDDEKLEKKN.

Residues 1–57 constitute a mitochondrion transit peptide; sequence MSRLLPLLRSRTARSLRPGPAAAAAPRPPSWCCCGRGLLALAAPGGPRALGTHPKKE. Residues 58-106 are Cytoplasmic-facing; it reads PIEALNTAQGARDFIYSLHSSERSCLLKELHRFESIAIAQEKLEAQPPT. The chain crosses the membrane as a helical span at residues 107–127; it reads PGQLRYVFIHNAIPFIGFGFL. Residues 128 to 138 lie on the Extracellular side of the membrane; it reads DNAIMIVAGTH. Residues 139–161 form a helical membrane-spanning segment; sequence IELSIGIILGISTMAAAALGNLV. The Cytoplasmic portion of the chain corresponds to 162-205; sequence SDLAGLGLAGYVEALASRLGLSIPDLSPKQVDMWQTRVSSHLGK. Residues 206 to 226 traverse the membrane as a helical segment; it reads AVGVTIGCILGMFPLIFFGGG. Over 227–236 the chain is Extracellular; the sequence is EDDEKLEKKN.

Monomer. Homodimer. Interacts with GJA1. Interacts weakly with DSP. Interacts with SCN1B.

It is found in the cell membrane. It localises to the mitochondrion inner membrane. Functionally, essential for maintaining proper cardiac intercalated disk (ICD) structure and function as well as cardiac conduction velocity in the heart. Its association with SCN1B is required for stabilizing the perinexus in the ICD and for localization of GJA1 and SCN5A to the ICD. May regulate the function of the gap junction protein GJA1 and may contribute to the stability and proper localization of GJA1 to cardiac intercalated disk thereby regulating gap junction communication. Regulates mitochondrial respiration and mitochondrial DNA copy number maintenance. The polypeptide is Transmembrane protein 65 (TMEM65) (Bos taurus (Bovine)).